A 235-amino-acid chain; its full sequence is MRFDLITLFPEFFHSPLQSGLIAKAIAKGLAEVHCTNPRDFTCDRHHKVDDEPYGGGAGMVLKPEPLAAALESLPVVTPRQVIYLSPQGEPMTQALFQDLATSVEQLVLVCGHYEGIDERVMTWIDREISLGDFVLTCGEIPALALLNGVLRLRPGTIGKEESHRCDSFSDGLLDYPHYTRPAEFRGLKVPEVLLSGNHGAIAAWRRQQQLERTRDRRPDLYQAWQAQQSDLDSH.

S-adenosyl-L-methionine is bound by residues Gly112 and 131 to 136 (LGDFVL).

It belongs to the RNA methyltransferase TrmD family. As to quaternary structure, homodimer.

Its subcellular location is the cytoplasm. The enzyme catalyses guanosine(37) in tRNA + S-adenosyl-L-methionine = N(1)-methylguanosine(37) in tRNA + S-adenosyl-L-homocysteine + H(+). Specifically methylates guanosine-37 in various tRNAs. The polypeptide is tRNA (guanine-N(1)-)-methyltransferase (Synechococcus elongatus (strain ATCC 33912 / PCC 7942 / FACHB-805) (Anacystis nidulans R2)).